An 88-amino-acid chain; its full sequence is UPF0297 protein GTNG_2488 (88 aa).

This sequence belongs to the UPF0297 family.

This chain is UPF0297 protein GTNG_2488, found in Geobacillus thermodenitrificans (strain NG80-2).